The primary structure comprises 531 residues: Ceramide kinase (531 aa).

Residues 1 to 115 are essential for enzyme activity; sequence MGAMGAAEPL…SADEQLCHLW (115 aa). Residues 1–125 form a required for binding to sulfatide and phosphoinositides region; it reads MGAMGAAEPL…LQTLRGLLES (125 aa). A DAGKc domain is found at 128–278; it reads SRPKHLLVFI…IDVSSVHYHN (151 aa). ATP is bound by residues 138–140 and 170–174; these read NPF and TEHAN. Position 195-198 (195-198) interacts with substrate; it reads GGDG. Aspartate 197 functions as the Proton donor/acceptor in the catalytic mechanism. Residues glutamate 202, 239–241, arginine 304, and arginine 310 contribute to the ATP site; that span reads GST. A phosphoserine mark is found at serine 340 and serine 408. 502 to 504 is an ATP binding site; the sequence is DGE.

Ca(2+) serves as cofactor. It depends on Mg(2+) as a cofactor. As to expression, high level expression in heart, brain, testis and pancreas; low expression in spleen, liver and lung; not detected in skeletal muscle.

It is found in the cytoplasm. It localises to the cell membrane. It catalyses the reaction an N-acylsphing-4-enine + ATP = an N-acylsphing-4-enine 1-phosphate + ADP + H(+). The catalysed reaction is N-(hexanoyl)sphing-4-enine + ATP = N-hexanoylsphing-4-enine 1-phosphate + ADP + H(+). The enzyme catalyses N-(acetyl)-sphing-4-enine + ATP = N-(acetyl)-sphing-4-enine-1-phosphate + ADP + H(+). It carries out the reaction N-hexadecanoylsphing-4-enine + ATP = N-(hexadecanoyl)-sphing-4-enine-1-phosphate + ADP + H(+). It catalyses the reaction N-hexanoyl-(4R)-hydroxysphinganine + ATP = N-hexanoyl-(4R)-hydroxysphinganine-1-phosphate + ADP + H(+). Functionally, catalyzes specifically the phosphorylation of ceramide to form ceramide 1-phosphate. Acts efficiently on natural and analog ceramides (C6, C8, C16 ceramides, and C8-dihydroceramide), to a lesser extent on C2-ceramide and C6-dihydroceramide, but not on other lipids, such as various sphingosines. Shows a greater preference for D-erythro isomer of ceramides. Binds phosphoinositides. The polypeptide is Ceramide kinase (Cerk) (Mus musculus (Mouse)).